A 469-amino-acid chain; its full sequence is Uronate isomerase (469 aa).

It belongs to the metallo-dependent hydrolases superfamily. Uronate isomerase family.

The enzyme catalyses D-glucuronate = D-fructuronate. It catalyses the reaction aldehydo-D-galacturonate = keto-D-tagaturonate. Its pathway is carbohydrate metabolism; pentose and glucuronate interconversion. This chain is Uronate isomerase, found in Mesorhizobium japonicum (strain LMG 29417 / CECT 9101 / MAFF 303099) (Mesorhizobium loti (strain MAFF 303099)).